Reading from the N-terminus, the 366-residue chain is Carbamoyl phosphate synthase small chain (366 aa).

The tract at residues 1–171 (MLERRYLVLE…KTPYVSTGSD (171 aa)) is CPSase. L-glutamine-binding residues include Ser-47, Gly-221, and Gly-223. The Glutamine amidotransferase type-1 domain occupies 173–360 (SVVLLDFGKK…MTMMKEFKEK (188 aa)). The active-site Nucleophile is Cys-248. L-glutamine contacts are provided by Leu-249, Gln-252, Asn-290, Gly-292, and Tyr-293. Residues His-333 and Glu-335 contribute to the active site.

This sequence belongs to the CarA family. As to quaternary structure, composed of two chains; the small (or glutamine) chain promotes the hydrolysis of glutamine to ammonia, which is used by the large (or ammonia) chain to synthesize carbamoyl phosphate. Tetramer of heterodimers (alpha,beta)4.

The enzyme catalyses hydrogencarbonate + L-glutamine + 2 ATP + H2O = carbamoyl phosphate + L-glutamate + 2 ADP + phosphate + 2 H(+). It catalyses the reaction L-glutamine + H2O = L-glutamate + NH4(+). The protein operates within amino-acid biosynthesis; L-arginine biosynthesis; carbamoyl phosphate from bicarbonate: step 1/1. Its pathway is pyrimidine metabolism; UMP biosynthesis via de novo pathway; (S)-dihydroorotate from bicarbonate: step 1/3. Functionally, small subunit of the glutamine-dependent carbamoyl phosphate synthetase (CPSase). CPSase catalyzes the formation of carbamoyl phosphate from the ammonia moiety of glutamine, carbonate, and phosphate donated by ATP, constituting the first step of 2 biosynthetic pathways, one leading to arginine and/or urea and the other to pyrimidine nucleotides. The small subunit (glutamine amidotransferase) binds and cleaves glutamine to supply the large subunit with the substrate ammonia. In Staphylococcus haemolyticus (strain JCSC1435), this protein is Carbamoyl phosphate synthase small chain.